Reading from the N-terminus, the 138-residue chain is Putative pre-16S rRNA nuclease (138 aa).

It belongs to the YqgF nuclease family.

It localises to the cytoplasm. Its function is as follows. Could be a nuclease involved in processing of the 5'-end of pre-16S rRNA. This Mycoplasma genitalium (strain ATCC 33530 / DSM 19775 / NCTC 10195 / G37) (Mycoplasmoides genitalium) protein is Putative pre-16S rRNA nuclease.